We begin with the raw amino-acid sequence, 235 residues long: Type II secretion system protein N (235 aa).

At 1–34 the chain is on the cytoplasmic side; that stretch reads MIPRRSSDITIKTRSDVLPFSGASSRWLQRYAPA. The chain crosses the membrane as a helical; Signal-anchor for type II membrane protein span at residues 35 to 55; it reads LLAVALIIAMSISLAWQAAGW. Over 56–235 the chain is Periplasmic; sequence LRLQRSPVAV…EPTTTPTESD (180 aa). The interval 205 to 235 is disordered; the sequence is DALRQQMEATPIAEPAEEDSSEPTTTPTESD. The span at 226-235 shows a compositional bias: low complexity; that stretch reads EPTTTPTESD.

It localises to the cell inner membrane. In terms of biological role, involved in a type II secretion system (T2SS, formerly general secretion pathway, GSP) for the export of proteins. Required for the translocation of a variety of enzymes across the outer membrane. The chain is Type II secretion system protein N (xcpP) from Pseudomonas aeruginosa (strain ATCC 15692 / DSM 22644 / CIP 104116 / JCM 14847 / LMG 12228 / 1C / PRS 101 / PAO1).